The chain runs to 177 residues: ATP synthase subunit delta (177 aa).

This sequence belongs to the ATPase delta chain family. F-type ATPases have 2 components, F(1) - the catalytic core - and F(0) - the membrane proton channel. F(1) has five subunits: alpha(3), beta(3), gamma(1), delta(1), epsilon(1). F(0) has three main subunits: a(1), b(2) and c(10-14). The alpha and beta chains form an alternating ring which encloses part of the gamma chain. F(1) is attached to F(0) by a central stalk formed by the gamma and epsilon chains, while a peripheral stalk is formed by the delta and b chains.

Its subcellular location is the cell inner membrane. Functionally, f(1)F(0) ATP synthase produces ATP from ADP in the presence of a proton or sodium gradient. F-type ATPases consist of two structural domains, F(1) containing the extramembraneous catalytic core and F(0) containing the membrane proton channel, linked together by a central stalk and a peripheral stalk. During catalysis, ATP synthesis in the catalytic domain of F(1) is coupled via a rotary mechanism of the central stalk subunits to proton translocation. In terms of biological role, this protein is part of the stalk that links CF(0) to CF(1). It either transmits conformational changes from CF(0) to CF(1) or is implicated in proton conduction. The chain is ATP synthase subunit delta from Pasteurella multocida (strain Pm70).